A 554-amino-acid polypeptide reads, in one-letter code: MSSQVAGLLQLTALIAALALAYRPLGDYMARVYSSEKHYRPEKWMYKAIGANPAAEMRWPAYLRGVLAFSAMSVLFLYLMQRVQGSLPGSLGFSSIDPDQAFNTAASFVANTNWQSYYGEQAMGHVVQTGGLAVQNFLSAAVGMAVAVALVRGFARSRTGELGNFWADLVRGTVRILVPISVIGAIVLVAAGAIQNFSGIHQVGQFAGGTQEWNGGAVASQEAIKELGTNGGGYFNANSAHPFENPNPLSNLFEVFLILLIPFALTRTFGRMAGSLKQGYAILGAMAVIWIGFTALMMWTEFAHRGPAFEIAGGAMEGKEARFGIAGSSIFAVATTLTSTGAVNSFHSSYTGFGGGITLLGMQLGEIAPGGVGSGLYGMLIMAIIAVFIAGLMVGRTPEYLGKKIGTRQIKFAACYILITPALVLGFTAVAMALPTPADSMTNSGAHGFSEILYAYTSGANNNGSAFAGLNADTQWFNTTIGIAMLLGRFLPMVFVLALAGSLAEQQPVPETAGTLRTDKPLYSGLLVGTILIITGLTYFPALALGPLAEGLAS.

A run of 12 helical transmembrane segments spans residues 1 to 21 (MSSQ…LALA), 59 to 79 (WPAY…FLYL), 131 to 151 (GLAV…VALV), 174 to 194 (VRIL…AGAI), 246 to 266 (PNPL…FALT), 279 to 299 (GYAI…LMMW), 323 to 343 (FGIA…TGAV), 352 to 372 (GFGG…PGGV), 375 to 395 (GLYG…LMVG), 412 to 432 (FAAC…AVAM), 481 to 501 (IGIA…ALAG), and 525 to 545 (GLLV…ALAL).

It belongs to the KdpA family. In terms of assembly, the system is composed of three essential subunits: KdpA, KdpB and KdpC.

The protein localises to the cell membrane. In terms of biological role, part of the high-affinity ATP-driven potassium transport (or Kdp) system, which catalyzes the hydrolysis of ATP coupled with the electrogenic transport of potassium into the cytoplasm. This subunit binds the extracellular potassium ions and delivers the ions to the membrane domain of KdpB through an intramembrane tunnel. The polypeptide is Potassium-transporting ATPase potassium-binding subunit (Streptomyces griseus subsp. griseus (strain JCM 4626 / CBS 651.72 / NBRC 13350 / KCC S-0626 / ISP 5235)).